The chain runs to 499 residues: Cytochrome P450 76T24 (499 aa).

A helical membrane pass occupies residues 3–23 (VDILLSLVLAFFGWAAIYFLT). N55, N76, N279, and N284 each carry an N-linked (GlcNAc...) asparagine glycan. Heme is bound at residue C442.

Belongs to the cytochrome P450 family.

It is found in the membrane. The sequence is that of Cytochrome P450 76T24 from Catharanthus roseus (Madagascar periwinkle).